We begin with the raw amino-acid sequence, 248 residues long: 5'-nucleotidase SurE (248 aa).

A divalent metal cation contacts are provided by aspartate 8, aspartate 9, serine 39, and asparagine 92.

Belongs to the SurE nucleotidase family. Requires a divalent metal cation as cofactor.

The protein resides in the cytoplasm. It carries out the reaction a ribonucleoside 5'-phosphate + H2O = a ribonucleoside + phosphate. Its function is as follows. Nucleotidase that shows phosphatase activity on nucleoside 5'-monophosphates. In Tolumonas auensis (strain DSM 9187 / NBRC 110442 / TA 4), this protein is 5'-nucleotidase SurE.